We begin with the raw amino-acid sequence, 181 residues long: MEEVKKDVYSVWALPDEESEPRFKKLMEALRSEFTGPRFVPHVTVAVSAYLTADEAKKMFESACDGLKAYTATVDRVSTGTFFFQCVFLLLQTTPEVMEAGEHCKNHFNCSTTTPYMPHLSLLYAELTEEEKKNAQEKAYTLDSSLDGLSFRLNRLALCKTDTEDKTLETWETVAVCNLNP.

H42 functions as the Proton donor/acceptor in the catalytic mechanism. T44 lines the substrate pocket. Intrachain disulfides connect C64/C177 and C104/C110. H119 acts as the Proton donor/acceptor in catalysis. S121 and Y124 together coordinate substrate.

This sequence belongs to the 2H phosphoesterase superfamily. CPD1 family. Expressed in leaves, stems, roots, floral buds and germinating seeds.

The protein resides in the cytoplasm. The enzyme catalyses ADP-alpha-D-ribose 1'',2''-cyclic phosphate + H2O = ADP-alpha-D-ribose 1''-phosphate + H(+). It carries out the reaction 2',3'-cyclophospho-AMP + H2O = adenosine 2'-phosphate + H(+). The catalysed reaction is 2',3'-cyclophospho-GMP + H2O = guanosine 2'-phosphate + H(+). It catalyses the reaction 2',3'-cyclophospho-UMP + H2O = uridine 2'-phosphate + H(+). The enzyme catalyses 2',3'-cyclophospho-CMP + H2O = cytidine 2'-phosphate + H(+). With respect to regulation, inhibited by Cu(2+) and Zn(2+) at 0.5 mM by 93 and 87% respectively. Not inhibited by Ca(2+), Mg(2+), Co(2+), Ni(2+), and EDTA at 0.5 mM. In terms of biological role, hydrolyzes ADP-ribose 1'',2''-cyclic phosphate (Appr&gt;1) that is produced during tRNA splicing into ADP-ribose 1''-phosphate (Appr-1''p). Also acts on nucleoside 2',3'-cyclic phosphates. The protein is Cyclic phosphodiesterase of Arabidopsis thaliana (Mouse-ear cress).